The following is a 215-amino-acid chain: UPF0319 protein VV2_0960 (215 aa).

Positions Met-1 to Ala-21 are cleaved as a signal peptide.

The protein belongs to the UPF0319 family.

The protein is UPF0319 protein VV2_0960 of Vibrio vulnificus (strain CMCP6).